Here is an 84-residue protein sequence, read N- to C-terminus: Putative defensin-like protein 38 (84 aa).

The first 26 residues, 1-26 (MASSKNGTVLFVSLMILLLISTGVKA), serve as a signal peptide directing secretion. 4 cysteine pairs are disulfide-bonded: C28/C84, C41/C65, C50/C76, and C54/C78.

It belongs to the DEFL family.

It is found in the secreted. This Arabidopsis thaliana (Mouse-ear cress) protein is Putative defensin-like protein 38.